The following is a 1337-amino-acid chain: MPTSGAPSNLDRANAQLSNTSSTESSSSNNSSTASGSRHVKIESNRVSLPPLKIQKGSFPAIRQPTESSTHFQSSHSVSNAHNQSPLNQSQSSANPVTFEIADEPSPSFNHSFFEKDNARDIPQQPSHSQNPSSSSSSSSSQSSQHSTHLQFQIPSNEKKSLDDPSPRRKPSFFSKSNLKRKYRYLKNPDAWNLPPSLQFIPKNLNRKGLKPVIRAAINSWIAFLLVLARHTNRVLGMSSFFVVITSILVPAMEPIAPMLWKTLFQFLLLFSAYAWTVLAAKLATVARGSPSREASLAQAVSEGFVCPDPSQGFNYCIREAVFQGYFVRPLPSIIWALFEFSAVALFIRLKMKYPPLNFPCVFSIICTAVSANMGPMYPYFYPRIGLFFIVPNCVQTGITIGCTLFILPETCNHAYNTMLCKLTEDTSSFLKRQTEMLSHSPASSHWASFSSLENEIANLKNLLSKMKSTELFLDMEFSYGRLKGEDLVSIQRIFKKTILRLSAFSYFQRLIDHNMQIYDDETIQKAGEATVSSWLNTPALSAASARTSSGRNSSESDRVSYFGLAPVNATTQDSERNGEEIRRLASKQLNVPVNNNFRTVGYASPSNASTASFNDIVQRGRSHVRTGSNNSEAPLAAKTSTTKRNGDLLEPQSPSLRSHKSRLHLPSSLGKFYKKRKKSYKPVGVLEAQQYLALESRLPFNKPQFLDSLLSILKNSSGDLFDQAIYSLDALNAWLVELNHDRIKKIFSKRDQKAAGRDRLKLIKLHYDHLSQALHEYEREKCFDVRKPYESLFQNQDVQQFYMHSLRSLFVVYYYESHLMQAVRGILQILETVIDLEERRPIRRLWWPLRSIRRSLLSQLTGHQGDYDENIHNDVDKDMNQSSTQPRDPDADHPSSLYHICGYRLTKFFKSIFRPMNVFVLKVGTLAVICTIPAFCRSSAGWYYRNRGLWAVILAIMSLQRFTADTVYGYLMRIFGTFFGAILGMVIWYTGSGHGLGNAYGLAAVWGAAIPFIQFIRVHFVILTPMPAVIFCVTAALTVTYSWKSNHEPGVVTLGIGWDVAYRRFLTVAAGITVAFIFSFLPQPRTAKYAVRKNIGNTLIDIGSIHCEISNFARRPVHNHIDPDIQSKVLNLSNTIQSLIGRLNMVNFEPSFKGRWPMEKYQLLCKTQLELVDLLNSLMTTITTLEDRWLFALLYRVGWLDHKFVADQLAVLYMSSNALQTGNPLPQVVPSPLVDRFFTTSGDVFLPPGLNDAPVPIPKAMEYELLNNMQYLNFAVGCTIAYAVVNHIDRIMFITKSLCGEIFEIDKWPFHFDDEYLYTCHPTNSPDQRKSPHDLV.

Disordered stretches follow at residues 1–94 and 119–174; these read MPTS…QSSA and ARDI…PSFF. 2 stretches are compositionally biased toward low complexity: residues 18 to 37 and 68 to 79; these read SNTSSTESSSSNNSSTASGS and SSTHFQSSHSVS. A compositionally biased stretch (polar residues) spans 80–94; that stretch reads NAHNQSPLNQSQSSA. Residues 123-147 show a composition bias toward low complexity; it reads PQQPSHSQNPSSSSSSSSSQSSQHS. Over residues 157–167 the composition is skewed to basic and acidic residues; sequence NEKKSLDDPSP. Transmembrane regions (helical) follow at residues 209-229, 241-261, 267-287, 328-348, 361-381, and 387-407; these read GLKPVIRAAINSWIAFLLVLA, FFVVITSILVPAMEPIAPMLW, FLLLFSAYAWTVLAAKLATVA, VRPLPSIIWALFEFSAVALFI, CVFSIICTAVSANMGPMYPYF, and LFFIVPNCVQTGITIGCTLFI. Disordered regions lie at residues 623-662 and 868-894; these read SHVRTGSNNSEAPLAAKTSTTKRNGDLLEPQSPSLRSHKS and YDENIHNDVDKDMNQSSTQPRDPDADH. Positions 626-644 are enriched in polar residues; sequence RTGSNNSEAPLAAKTSTTK. The span at 868-880 shows a compositional bias: basic and acidic residues; sequence YDENIHNDVDKDM. Helical transmembrane passes span 917–937, 975–995, 997–1017, 1021–1041, 1066–1086, and 1275–1295; these read MNVFVLKVGTLAVICTIPAFC, IFGTFFGAILGMVIWYTGSGH, LGNAYGLAAVWGAAIPFIQFI, FVILTPMPAVIFCVTAALTVT, FLTVAAGITVAFIFSFLPQPR, and FAVGCTIAYAVVNHIDRIMFI.

It localises to the membrane. This is an uncharacterized protein from Schizosaccharomyces pombe (strain 972 / ATCC 24843) (Fission yeast).